The sequence spans 125 residues: uncharacterized protein (125 aa).

The HTH dtxR-type domain maps to 1–63 (MSQSIEDYLE…YEPYIGITLT (63 aa)).

The protein belongs to the DtxR/MntR family.

This is an uncharacterized protein from Methanocaldococcus jannaschii (strain ATCC 43067 / DSM 2661 / JAL-1 / JCM 10045 / NBRC 100440) (Methanococcus jannaschii).